A 341-amino-acid polypeptide reads, in one-letter code: Dye-decolorizing peroxidase (341 aa).

The active-site Proton acceptor is the D148. H221 serves as a coordination point for heme. Residues 304–341 (FLDDPPDAPTRLVPEATFTAPISDGSLGIGSLKRSAQQ) form a targeting peptide region.

The protein belongs to the DyP-type peroxidase family. As to quaternary structure, homohexamer. It depends on heme b as a cofactor.

It is found in the encapsulin nanocompartment. Functionally, cargo protein of a type 1 encapsulin nanocompartment. Has both general peroxidase activity and dye-decolorizing activity. Can catalyze the oxidation of both protoporphyrinogen IX and coproporphyrinogen III to their corresponding porphyrins. Also efficiently decolorizes the dyes alizarin red and Cibacron blue F3GA. This cargo-loaded encapsulin nanocompartment is probably involved in protection against oxidative damage. The protein is Dye-decolorizing peroxidase of Rhodococcus erythropolis (strain PR4 / NBRC 100887).